Reading from the N-terminus, the 575-residue chain is Septation ring formation regulator EzrA (575 aa).

Over 1–8 (MSNGQLIY) the chain is Extracellular. The chain crosses the membrane as a helical span at residues 9 to 27 (LMVAIAVILVLAYVVAIFL). Topologically, residues 28–575 (RKRNEGRLEA…YEKTRETIRF (548 aa)) are cytoplasmic. 4 coiled-coil regions span residues 105–191 (LKAS…FVTL), 265–301 (LYEA…LYDI), 354–416 (VRRI…IEKD), and 456–526 (TASN…IQEA).

Belongs to the EzrA family.

The protein resides in the cell membrane. In terms of biological role, negative regulator of FtsZ ring formation; modulates the frequency and position of FtsZ ring formation. Inhibits FtsZ ring formation at polar sites. Interacts either with FtsZ or with one of its binding partners to promote depolymerization. The protein is Septation ring formation regulator EzrA of Streptococcus pneumoniae serotype 4 (strain ATCC BAA-334 / TIGR4).